The following is a 351-amino-acid chain: Mediator of RNA polymerase II transcription subunit 18 (351 aa).

The segment at 153-231 is disordered; it reads GNGDPIDIDT…LPQSLSNGVS (79 aa). Residues 163-204 are compositionally biased toward basic and acidic residues; it reads NNDKQGDNNTDKPKQEHDGKLPEAIDEDIIKNGDEKKTTHDD. Over residues 205 to 216 the composition is skewed to acidic residues; sequence NDSDIMEIDEPN. Positions 217 to 231 are enriched in polar residues; sequence PETQTLPQSLSNGVS.

It belongs to the Mediator complex subunit 18 family. As to quaternary structure, component of the Mediator complex.

Its subcellular location is the nucleus. Functionally, component of the Mediator complex, a coactivator involved in the regulated transcription of nearly all RNA polymerase II-dependent genes. Mediator functions as a bridge to convey information from gene-specific regulatory proteins to the basal RNA polymerase II transcription machinery. Mediator is recruited to promoters by direct interactions with regulatory proteins and serves as a scaffold for the assembly of a functional preinitiation complex with RNA polymerase II and the general transcription factors. This Candida albicans (strain SC5314 / ATCC MYA-2876) (Yeast) protein is Mediator of RNA polymerase II transcription subunit 18 (SRB5).